Consider the following 133-residue polypeptide: Small ribosomal subunit protein bS6 (133 aa).

Belongs to the bacterial ribosomal protein bS6 family.

Binds together with bS18 to 16S ribosomal RNA. The sequence is that of Small ribosomal subunit protein bS6 from Borrelia turicatae (strain 91E135).